Reading from the N-terminus, the 500-residue chain is ATP synthase subunit beta (500 aa).

155-162 (GGAGVGKT) provides a ligand contact to ATP.

Belongs to the ATPase alpha/beta chains family. F-type ATPases have 2 components, CF(1) - the catalytic core - and CF(0) - the membrane proton channel. CF(1) has five subunits: alpha(3), beta(3), gamma(1), delta(1), epsilon(1). CF(0) has three main subunits: a(1), b(2) and c(9-12). The alpha and beta chains form an alternating ring which encloses part of the gamma chain. CF(1) is attached to CF(0) by a central stalk formed by the gamma and epsilon chains, while a peripheral stalk is formed by the delta and b chains.

It localises to the cell inner membrane. It catalyses the reaction ATP + H2O + 4 H(+)(in) = ADP + phosphate + 5 H(+)(out). Produces ATP from ADP in the presence of a proton gradient across the membrane. The catalytic sites are hosted primarily by the beta subunits. This Azobacteroides pseudotrichonymphae genomovar. CFP2 protein is ATP synthase subunit beta.